The chain runs to 580 residues: tRNA-guanine(15) transglycosylase (580 aa).

The active-site Nucleophile is the Asp91. Asp126 and Ala192 together coordinate substrate. Zn(2+) is bound by residues Cys275, Cys277, and Cys280. Residues 504–579 (RMRVVVDEDA…LAVKVRRGVE (76 aa)) form the PUA domain.

Belongs to the archaeosine tRNA-ribosyltransferase family. Zn(2+) is required as a cofactor.

The enzyme catalyses guanosine(15) in tRNA + 7-cyano-7-deazaguanine = 7-cyano-7-carbaguanosine(15) in tRNA + guanine. It functions in the pathway tRNA modification; archaeosine-tRNA biosynthesis. Functionally, exchanges the guanine residue with 7-cyano-7-deazaguanine (preQ0) at position 15 in the dihydrouridine loop (D-loop) of archaeal tRNAs. This is tRNA-guanine(15) transglycosylase from Thermococcus kodakarensis (strain ATCC BAA-918 / JCM 12380 / KOD1) (Pyrococcus kodakaraensis (strain KOD1)).